We begin with the raw amino-acid sequence, 190 residues long: Peptidoglycan recognition protein 1 (190 aa).

The N-terminal stretch at 1-21 (MSRRYTPLAWVLLALLGLGAA) is a signal peptide. Q22 carries the pyrrolidone carboxylic acid modification. 3 cysteine pairs are disulfide-bonded: C24/C148, C40/C85, and C61/C67. The N-acetylmuramoyl-L-alanine amidase domain maps to 46-174 (QPVRYVVVSH…RDVQQTLSPG (129 aa)).

It belongs to the N-acetylmuramoyl-L-alanine amidase 2 family. As to quaternary structure, homodimer; disulfide-linked. In terms of tissue distribution, synthesized only in bone marrow. The mature protein is stored in the cytoplasmic granules of eosinophils and neutrophils but is absent from monocytes, lymphocytes, or platelets.

The protein resides in the secreted. Its subcellular location is the cytoplasmic granule. Functionally, innate immunity protein that plays several important functions in antimicrobial and antitumor defense systems. Acts as a pattern receptor that binds to murein peptidoglycans (PGN) of Gram-positive bacteria and thus provides bactericidal activity. Forms an equimolar complex with heat shock protein HSPA1A and induces programmed cell death through apoptosis and necroptosis in tumor cell lines by activating the TNFR1 receptor on the target cell membrane. In addition, acts in complex with the Ca(2+)-binding protein S100A4 as a chemoattractant able to induce lymphocyte movement. Mechanistically, this complex acts as a ligand of the chemotactic receptors CCR5 and CXCR3 which are present on the cells of the immune system. Also promotes the activation of lymphocytes that become able to kill virus-infected cells as well as tumor cells by modulating the spectrum of their target-cell specificity. Induction of cytotoxicity on monocyte surface requires interaction with TREM1 receptor. The polypeptide is Peptidoglycan recognition protein 1 (PGLYRP1) (Bos taurus (Bovine)).